Here is a 98-residue protein sequence, read N- to C-terminus: Small ribosomal subunit protein bS6 (98 aa).

This sequence belongs to the bacterial ribosomal protein bS6 family.

Its function is as follows. Binds together with bS18 to 16S ribosomal RNA. The protein is Small ribosomal subunit protein bS6 of Limosilactobacillus reuteri (strain DSM 20016) (Lactobacillus reuteri).